The following is a 1622-amino-acid chain: ABC transporter C family member 1 (1622 aa).

The next 9 membrane-spanning stretches (helical) occupy residues 37–57 (FVLG…LWLI), 73–93 (FSYF…FRLV), 110–130 (EAFM…MTVV), 145–165 (FAVI…LSVK), 174–194 (YLYI…FVYF), 336–356 (AWIG…GVLC), 440–460 (VASI…TVII), 527–547 (FILN…FSLL), and 557–577 (FTSL…PNII). Residues 302 to 582 (FWWGGFWKIG…LPNIITQMVN (281 aa)) form the ABC transmembrane type-1 1 domain. One can recognise an ABC transporter 1 domain in the interval 614-838 (ISIRNGYFSW…GPLFQRLMEN (225 aa)). Residue 649–656 (GSTGEGKT) coordinates ATP. Residues 852–876 (AEVDQTSVKPVENGNANNLQKDGIE) form a disordered region. Over residues 855–871 (DQTSVKPVENGNANNLQ) the composition is skewed to polar residues. 6 helical membrane passes run 909 to 929 (ALGG…TQVF), 951 to 971 (PLFY…VTLI), 1027 to 1049 (AVFV…LIGI), 1053 to 1072 (LSLW…YLYY), 1138 to 1158 (LGIR…SLAV), and 1172 to 1192 (STMG…TAVL). An ABC transmembrane type-1 2 domain is found at 916 to 1200 (VMMLVICYVL…VLRLASLAEN (285 aa)). Residues 1231–1246 (WPSSGSIKFEDVVLRY) are interaction with calmodulin and FKP42/TWD1. Residues 1237–1471 (IKFEDVVLRY…GESSFSKMVQ (235 aa)) form the ABC transporter 2 domain. 1271 to 1278 (GRTGAGKS) serves as a coordination point for ATP.

This sequence belongs to the ABC transporter superfamily. ABCC family. Conjugate transporter (TC 3.A.1.208) subfamily. As to quaternary structure, interacts with calmodulin (CaM), PAS1 and FKBP42/TWD1. Ubiquitous, with higher levels in leaves and stems and lower levels in roots. Localized in the root apex, root hair tips and root epidermis.

The protein resides in the vacuole membrane. The catalysed reaction is ATP + H2O + xenobioticSide 1 = ADP + phosphate + xenobioticSide 2.. In terms of biological role, pump for glutathione S-conjugates. Mediates the transport of S-(2,4-dinitrophenyl)-glutathione (DNP-GS), GSSG, cyanidin 3-glucoside-GS (C3G-GS) and metolachlor-GS (MOC-GS). This chain is ABC transporter C family member 1 (ABCC1), found in Arabidopsis thaliana (Mouse-ear cress).